A 324-amino-acid polypeptide reads, in one-letter code: NADH-ubiquinone oxidoreductase chain 1 (324 aa).

8 consecutive transmembrane segments (helical) span residues 3 to 23, 73 to 93, 106 to 126, 151 to 171, 175 to 195, 226 to 246, 255 to 275, and 295 to 315; these read LLFM…AVAF, LLFI…WTPF, ILFI…SGWA, ALII…AFAI, FTWF…STLA, LFFL…TIIF, TLTT…FLWV, and FLPL…SLLF.

This sequence belongs to the complex I subunit 1 family.

The protein localises to the mitochondrion inner membrane. The enzyme catalyses a ubiquinone + NADH + 5 H(+)(in) = a ubiquinol + NAD(+) + 4 H(+)(out). Core subunit of the mitochondrial membrane respiratory chain NADH dehydrogenase (Complex I) that is believed to belong to the minimal assembly required for catalysis. Complex I functions in the transfer of electrons from NADH to the respiratory chain. The immediate electron acceptor for the enzyme is believed to be ubiquinone. This Aquarana catesbeiana (American bullfrog) protein is NADH-ubiquinone oxidoreductase chain 1 (MT-ND1).